We begin with the raw amino-acid sequence, 89 residues long: Putative regulatory protein Dalk_1931 (89 aa).

The protein belongs to the RemA family.

In Desulfatibacillum aliphaticivorans, this protein is Putative regulatory protein Dalk_1931.